The primary structure comprises 615 residues: Chaperone protein DnaK (615 aa).

Thr177 carries the phosphothreonine; by autocatalysis modification. Residues 567-615 are disordered; sequence TKESQGIAMKAYQKAQEKQAQEKGTQENTTAKNEKPQDEVVDADFEEKK. The span at 581–591 shows a compositional bias: basic and acidic residues; that stretch reads AQEKQAQEKGT. Positions 605–615 are enriched in acidic residues; sequence EVVDADFEEKK.

It belongs to the heat shock protein 70 family.

Its function is as follows. Acts as a chaperone. The chain is Chaperone protein DnaK from Onion yellows phytoplasma (strain OY-M).